We begin with the raw amino-acid sequence, 52 residues long: MFDDLPPISHKEQQEAVERIQELMAKGTSTAEAIKIVADQIRAEYAAKQQGS.

It belongs to the UPF0181 family.

This Vibrio parahaemolyticus serotype O3:K6 (strain RIMD 2210633) protein is UPF0181 protein VPA0916.